A 98-amino-acid chain; its full sequence is Large ribosomal subunit protein eL30 (98 aa).

Belongs to the eukaryotic ribosomal protein eL30 family.

The polypeptide is Large ribosomal subunit protein eL30 (rpl30e) (Methanothermobacter thermautotrophicus (strain ATCC 29096 / DSM 1053 / JCM 10044 / NBRC 100330 / Delta H) (Methanobacterium thermoautotrophicum)).